The following is a 271-amino-acid chain: Thiosulfate sulfurtransferase (271 aa).

2 consecutive Rhodanese domains span residues 21–129 (GAPE…ALDR) and 159–270 (GAAD…TPVE). The active-site Cysteine persulfide intermediate is cysteine 230.

The protein localises to the cytoplasm. It carries out the reaction thiosulfate + hydrogen cyanide = thiocyanate + sulfite + 2 H(+). Catalyzes the sulfur transfer reaction from thiosulfate to cyanide, thus converting cyanide to the less toxic thiocyanate. Contributes to P.aeruginosa survival under cyanogenic conditions, and thus provides the bacterium with a defense mechanism against endogenous cyanide toxicity. Is the main cytoplasmic rhodanese in P.aeruginosa, accounting for 90% of total rhodanese activity. The protein is Thiosulfate sulfurtransferase of Pseudomonas aeruginosa (strain ATCC 15692 / DSM 22644 / CIP 104116 / JCM 14847 / LMG 12228 / 1C / PRS 101 / PAO1).